Here is a 260-residue protein sequence, read N- to C-terminus: MSEARHNPVLAGQTAVITGGASGIGKSIVQRFLEAGASCLAADLNEEALAALKQELAEYGDKLDVVKVDVSNRDDVEGMVDRAVQTFGQMDIIVNNAGIMDNLLPIAEMDDDVWERLMKVNLNSVMYGTRKAVRYFMERGEGGVIINTASLSGLCAGRGGCAYTASKFAVVGLTKNVAFMYADTGIRCNAICPGNTQTNIGVGMRQPSERGMAKATTGYAGATRSGTPEEISAAAAFLASDQAGFINGETLTIDGGWSAY.

NAD(+)-binding positions include Asp-43, 69–70, Asn-96, Tyr-163, and Lys-167; that span reads DV. Tyr-163 functions as the Proton acceptor in the catalytic mechanism.

Belongs to the short-chain dehydrogenases/reductases (SDR) family.

The catalysed reaction is 3-oxo-5beta-cholan-24-oate + NADH + H(+) = isolithocholate + NAD(+). It catalyses the reaction 12alpha-hydroxy-3-oxo-5beta-cholan-24-oate + NADH + H(+) = isodeoxycholate + NAD(+). The enzyme catalyses 12alpha-hydroxy-3-oxo-5beta-cholan-24-oate + NADPH + H(+) = isodeoxycholate + NADP(+). It carries out the reaction 7alpha,12alpha-dihydroxy-3-oxo-5beta-cholan-24-oate + NADH + H(+) = isocholate + NAD(+). The catalysed reaction is 3-oxochenodeoxycholate + NADH + H(+) = isochenodeoxycholate + NAD(+). Functionally, involved in the modification of secondary bile acids into iso-bile acids (3beta-bile acids) via epimerization of the 3-OH group through a 3-oxo-intermediate. Catalyzes the reduction of 12-alpha-hydroxy-3-oxo-5-beta-cholan-24-oate (3-oxo-DCA) and 3-oxo-5-beta-cholan-24-oate (3-oxo-LCA) to yield isodeoxycholate (isoDCA) and isolithocholate (isoLCA), respectively. Is also able to catalyze the reduction of 3-dehydrocholate (3-oxo-CA or 7alpha,12alpha-dihydroxy-3-oxo-5beta-cholan-24-oate) and 7-alpha-hydroxy-3-oxo-5-beta-cholan-24-oate (3-oxo-CDCA), into isocholate (isoCA) and isochenodeoxycholate (isoCDCA), respectively. Accepts both NADH and NADPH as cosubstrates. The conversion of the abundant bile acid deoxycholate (DCA) into isoDCA by the gut bacterium E.lenta favors the growth of the keystone commensal genus Bacteroides, since isoDCA is less cytotoxic than its parent compound, DCA; iso-bile acids have thus a potential role in modulating gut community composition. This is 3beta-hydroxysteroid dehydrogenase 2 from Eggerthella lenta (strain ATCC 25559 / DSM 2243 / CCUG 17323 / JCM 9979 / KCTC 3265 / NCTC 11813 / VPI 0255 / 1899 B) (Eubacterium lentum).